A 329-amino-acid chain; its full sequence is DNA polymerase III subunit delta' (329 aa).

Component of the DNA clamp loading complex consisting of tau(3):delta(1):delta'(1). The DNA polymerase III holoenzyme complex contains at least 10 different subunits organized into 3 functionally essential subassemblies: the Pol III core, the beta sliding clamp processivity factor and the clamp-loading complex. The Pol III core (subunits alpha, epsilon and theta) contains the polymerase and the 3'-5' exonuclease proofreading activities. The polymerase is tethered to the template via the dimeric beta sliding clamp processivity factor. The DNA clamp-loading complex assembles the beta sliding clamp onto the primed template and plays a central role in the organization and communication at the replication fork.

It is found in the cytoplasm. It localises to the nucleoid. It catalyses the reaction DNA(n) + a 2'-deoxyribonucleoside 5'-triphosphate = DNA(n+1) + diphosphate. Its function is as follows. DNA polymerase III is a complex, multichain enzyme responsible for most of the replicative synthesis in bacteria. This is DNA polymerase III subunit delta' (holB) from Bacillus subtilis (strain 168).